Here is a 133-residue protein sequence, read N- to C-terminus: Small ribosomal subunit protein uS8c (133 aa).

The protein belongs to the universal ribosomal protein uS8 family. In terms of assembly, part of the 30S ribosomal subunit.

The protein localises to the plastid. It localises to the chloroplast. Its function is as follows. One of the primary rRNA binding proteins, it binds directly to 16S rRNA central domain where it helps coordinate assembly of the platform of the 30S subunit. This Pyropia yezoensis (Susabi-nori) protein is Small ribosomal subunit protein uS8c (rps8).